A 442-amino-acid polypeptide reads, in one-letter code: D-serine dehydratase (442 aa).

At Lys118 the chain carries N6-(pyridoxal phosphate)lysine.

The protein belongs to the serine/threonine dehydratase family. DsdA subfamily. In terms of assembly, monomer. Pyridoxal 5'-phosphate is required as a cofactor.

It carries out the reaction D-serine = pyruvate + NH4(+). This Shigella dysenteriae serotype 1 (strain Sd197) protein is D-serine dehydratase.